Here is a 52-residue protein sequence, read N- to C-terminus: uncharacterized protein (52 aa).

Residues 21–40 (VAMNSYVELLFLSVPLIHIF) traverse the membrane as a helical segment.

The protein resides in the cell membrane. This is an uncharacterized protein from Bacillus subtilis (strain 168).